The following is an 855-amino-acid chain: DNA mismatch repair protein MutS (855 aa).

618 to 625 is an ATP binding site; it reads GPNMGGKS.

The protein belongs to the DNA mismatch repair MutS family.

In terms of biological role, this protein is involved in the repair of mismatches in DNA. It is possible that it carries out the mismatch recognition step. This protein has a weak ATPase activity. This Shewanella loihica (strain ATCC BAA-1088 / PV-4) protein is DNA mismatch repair protein MutS.